Consider the following 976-residue polypeptide: uncharacterized protein (976 aa).

This is an uncharacterized protein from Acanthamoeba polyphaga (Amoeba).